The following is a 106-amino-acid chain: Phosphoribosyl-ATP pyrophosphatase (106 aa).

The protein belongs to the PRA-PH family.

Its subcellular location is the cytoplasm. The catalysed reaction is 1-(5-phospho-beta-D-ribosyl)-ATP + H2O = 1-(5-phospho-beta-D-ribosyl)-5'-AMP + diphosphate + H(+). It participates in amino-acid biosynthesis; L-histidine biosynthesis; L-histidine from 5-phospho-alpha-D-ribose 1-diphosphate: step 2/9. This chain is Phosphoribosyl-ATP pyrophosphatase, found in Geotalea daltonii (strain DSM 22248 / JCM 15807 / FRC-32) (Geobacter daltonii).